A 201-amino-acid chain; its full sequence is FMN-dependent NADH:quinone oxidoreductase (201 aa).

Residues Ser-10, 16 to 18, 95 to 98, and 139 to 142 contribute to the FMN site; these read SQS, MYNF, and TTGG.

This sequence belongs to the azoreductase type 1 family. Homodimer. It depends on FMN as a cofactor.

It catalyses the reaction 2 a quinone + NADH + H(+) = 2 a 1,4-benzosemiquinone + NAD(+). The enzyme catalyses N,N-dimethyl-1,4-phenylenediamine + anthranilate + 2 NAD(+) = 2-(4-dimethylaminophenyl)diazenylbenzoate + 2 NADH + 2 H(+). Functionally, quinone reductase that provides resistance to thiol-specific stress caused by electrophilic quinones. Also exhibits azoreductase activity. Catalyzes the reductive cleavage of the azo bond in aromatic azo compounds to the corresponding amines. The protein is FMN-dependent NADH:quinone oxidoreductase of Tolumonas auensis (strain DSM 9187 / NBRC 110442 / TA 4).